Here is a 178-residue protein sequence, read N- to C-terminus: Cytochrome b6-f complex iron-sulfur subunit 2 (178 aa).

The chain crosses the membrane as a helical span at residues 17 to 36; it reads LLNFFTGAIVAATASAAIYP. One can recognise a Rieske domain in the interval 61-161; that stretch reads GHPIPASQIL…VQVKDDYIWI (101 aa). Residues Cys-107, His-109, Cys-125, and His-128 each coordinate [2Fe-2S] cluster. A disulfide bond links Cys-112 and Cys-127.

Belongs to the Rieske iron-sulfur protein family. In terms of assembly, the 4 large subunits of the cytochrome b6-f complex are cytochrome b6, subunit IV (17 kDa polypeptide, PetD), cytochrome f and the Rieske protein, while the 4 small subunits are PetG, PetL, PetM and PetN. The complex functions as a dimer. Requires [2Fe-2S] cluster as cofactor.

It is found in the cellular thylakoid membrane. It carries out the reaction 2 oxidized [plastocyanin] + a plastoquinol + 2 H(+)(in) = 2 reduced [plastocyanin] + a plastoquinone + 4 H(+)(out). Functionally, component of the cytochrome b6-f complex, which mediates electron transfer between photosystem II (PSII) and photosystem I (PSI), cyclic electron flow around PSI, and state transitions. The polypeptide is Cytochrome b6-f complex iron-sulfur subunit 2 (Trichormus variabilis (strain ATCC 29413 / PCC 7937) (Anabaena variabilis)).